Reading from the N-terminus, the 337-residue chain is Cysteine synthase 3 (337 aa).

K47 is subject to N6-(pyridoxal phosphate)lysine. Residues N78, 182–186, and S270 contribute to the pyridoxal 5'-phosphate site; that span reads GSSGT.

The protein belongs to the cysteine synthase/cystathionine beta-synthase family. As to quaternary structure, homodimer. Pyridoxal 5'-phosphate is required as a cofactor.

The catalysed reaction is O-acetyl-L-serine + hydrogen sulfide = L-cysteine + acetate. It functions in the pathway amino-acid biosynthesis; L-cysteine biosynthesis; L-cysteine from L-serine: step 2/2. Its function is as follows. Primarily catalyzes the formation of cysteine and acetate from O-acetylserine and hydrogen sulfide. Can also catalyze the formation of cysteine and acetate from S-sulfocysteine and hydrogen sulfide and the formation of cyanoalanine and hydrogen sulfide from either S-sulfocysteine or O-acetylserine and hydrogen cyanide. This chain is Cysteine synthase 3, found in Caenorhabditis elegans.